Consider the following 571-residue polypeptide: MRYTDYLLPTLKETPSDAEVISHKLMLRAGMIRKLAAGIYNYLPFGLRSIRKVEQIVREEMDRAGAMELLMPMVVPSELWEESGRWEHYGKELLRFTDRKDASFCLGPTHEEVITDLVRNTVRSYRQLPLNLYQIQGKFRDEIRPRFGLMRGREFIMKDAYSFDIDEAGADVAYEKMYQAYRRIFERCGLKFRAVEADTGNIGGSSSHEFMVLAASGEDAIVSCGQCEYAANIEKAEVALTASDTPVAAAELARVDTPGCKSIEEVAAFLKVDKERLVKTLIVQTDAGETLAVLLRGNHELNDIKLCRLLGCNEITLAPDDVVGKVTGAAPGFAGPVDLSLRVLADFAVQGMADFVTGANAADTHYVGVNLERDFTVEQFADLRAAEAGDICPRCGGVLEIWRGIEVGHVFKLGTKYSAALGATVLDDQGQDRELFMGCYGIGVGRTVAAAIEQNHDENGIVFPMPIAPFHVLVTVVNPRQEEVLAAAENLYAELQALGVEVLLDDRDERPGSKFKDADLIGIPLRLTVGARGLKENAVELQERAGGERRMLPLAEAAALVRDMVVEACGR.

This sequence belongs to the class-II aminoacyl-tRNA synthetase family. ProS type 1 subfamily. As to quaternary structure, homodimer.

It is found in the cytoplasm. It catalyses the reaction tRNA(Pro) + L-proline + ATP = L-prolyl-tRNA(Pro) + AMP + diphosphate. Its function is as follows. Catalyzes the attachment of proline to tRNA(Pro) in a two-step reaction: proline is first activated by ATP to form Pro-AMP and then transferred to the acceptor end of tRNA(Pro). As ProRS can inadvertently accommodate and process non-cognate amino acids such as alanine and cysteine, to avoid such errors it has two additional distinct editing activities against alanine. One activity is designated as 'pretransfer' editing and involves the tRNA(Pro)-independent hydrolysis of activated Ala-AMP. The other activity is designated 'posttransfer' editing and involves deacylation of mischarged Ala-tRNA(Pro). The misacylated Cys-tRNA(Pro) is not edited by ProRS. The chain is Proline--tRNA ligase from Syntrophotalea carbinolica (strain DSM 2380 / NBRC 103641 / GraBd1) (Pelobacter carbinolicus).